A 291-amino-acid chain; its full sequence is Homeobox protein SIX2 (291 aa).

The segment at residues 124-183 (GEETSYCFKEKSRSVLREWYAHNPYPSPREKRELAEATGLTTTQVSNWFKNRRQRDRAAE) is a DNA-binding region (homeobox). The interval 168–279 (VSNWFKNRRQ…HHHGLQDSIL (112 aa)) is disordered. Residues 179–190 (DRAAEAKERENN) show a composition bias toward basic and acidic residues. Positions 224-233 (HSSSSPALLL) are enriched in low complexity. Positions 249–259 (PPGPSAVPVPV) are enriched in pro residues.

Belongs to the SIX/Sine oculis homeobox family. In terms of assembly, interacts with TCF7L2; in a canonical Wnt signaling independent manner; prevents transcription of differentiation genes in cap mesenchyme. Interacts with OSR1; form a strong repressor complex with TCF7L2, TLE2 and TLE3 to prevent the activation of Wnt/beta-catenin target genes in the cap mesenchyme. Interacts with HOXA11, EYA1 and EYA3. In terms of tissue distribution, strongly expressed in skeletal muscle. Expressed in Wilms' tumor and in the cap mesenchyme of fetal kidney (at protein level).

It localises to the nucleus. In terms of biological role, transcription factor that plays an important role in the development of several organs, including kidney, skull and stomach. During kidney development, maintains cap mesenchyme multipotent nephron progenitor cells in an undifferentiated state by opposing the inductive signals emanating from the ureteric bud and cooperates with WNT9B to promote renewing progenitor cells proliferation. Acts through its interaction with TCF7L2 and OSR1 in a canonical Wnt signaling independent manner preventing transcription of differentiation genes in cap mesenchyme such as WNT4. Also acts independently of OSR1 to activate expression of many cap mesenchyme genes, including itself, GDNF and OSR1. During craniofacial development plays a role in growth and elongation of the cranial base through regulation of chondrocyte differentiation. During stomach organogenesis, controls pyloric sphincter formation and mucosal growth through regulation of a gene network including NKX2-5, BMPR1B, BMP4, SOX9 and GREM1. During branchial arch development, acts to mediate HOXA2 control over the insulin-like growth factor pathway. May also be involved in limb tendon and ligament development. Plays a role in cell proliferation and migration. The chain is Homeobox protein SIX2 (SIX2) from Homo sapiens (Human).